Reading from the N-terminus, the 457-residue chain is Siroheme synthase (457 aa).

The segment at 1–204 is precorrin-2 dehydrogenase /sirohydrochlorin ferrochelatase; the sequence is MDHLPIFCQL…NDQKAITETT (204 aa). NAD(+) is bound by residues 22-23 and 43-44; these read DV and LA. Ser128 bears the Phosphoserine mark. The tract at residues 216–457 is uroporphyrinogen-III C-methyltransferase; it reads GEVVLVGAGP…RDKLNWFSNH (242 aa). Pro225 contributes to the S-adenosyl-L-methionine binding site. The Proton acceptor role is filled by Asp248. The active-site Proton donor is Lys270. S-adenosyl-L-methionine is bound by residues 301-303, Ile306, 331-332, Met382, and Gly411; these read GGD and TA.

It in the N-terminal section; belongs to the precorrin-2 dehydrogenase / sirohydrochlorin ferrochelatase family. In the C-terminal section; belongs to the precorrin methyltransferase family.

The catalysed reaction is uroporphyrinogen III + 2 S-adenosyl-L-methionine = precorrin-2 + 2 S-adenosyl-L-homocysteine + H(+). It catalyses the reaction precorrin-2 + NAD(+) = sirohydrochlorin + NADH + 2 H(+). The enzyme catalyses siroheme + 2 H(+) = sirohydrochlorin + Fe(2+). Its pathway is cofactor biosynthesis; adenosylcobalamin biosynthesis; precorrin-2 from uroporphyrinogen III: step 1/1. It functions in the pathway cofactor biosynthesis; adenosylcobalamin biosynthesis; sirohydrochlorin from precorrin-2: step 1/1. The protein operates within porphyrin-containing compound metabolism; siroheme biosynthesis; precorrin-2 from uroporphyrinogen III: step 1/1. It participates in porphyrin-containing compound metabolism; siroheme biosynthesis; siroheme from sirohydrochlorin: step 1/1. Its pathway is porphyrin-containing compound metabolism; siroheme biosynthesis; sirohydrochlorin from precorrin-2: step 1/1. In terms of biological role, multifunctional enzyme that catalyzes the SAM-dependent methylations of uroporphyrinogen III at position C-2 and C-7 to form precorrin-2 via precorrin-1. Then it catalyzes the NAD-dependent ring dehydrogenation of precorrin-2 to yield sirohydrochlorin. Finally, it catalyzes the ferrochelation of sirohydrochlorin to yield siroheme. The sequence is that of Siroheme synthase from Escherichia fergusonii (strain ATCC 35469 / DSM 13698 / CCUG 18766 / IAM 14443 / JCM 21226 / LMG 7866 / NBRC 102419 / NCTC 12128 / CDC 0568-73).